Consider the following 161-residue polypeptide: uncharacterized protein (161 aa).

This sequence belongs to the SixA phosphatase family.

This is an uncharacterized protein from Mycobacterium leprae (strain TN).